A 132-amino-acid polypeptide reads, in one-letter code: Intraflagellar transport protein 20 homolog A (132 aa).

The stretch at 87–112 (EAQQQQLYALIAEKKMQLERYRIEYD) forms a coiled coil.

The protein localises to the golgi apparatus. Its subcellular location is the cis-Golgi network. It localises to the cytoplasm. It is found in the cytoskeleton. The protein resides in the microtubule organizing center. The protein localises to the centrosome. Its subcellular location is the centriole. It localises to the cell projection. It is found in the cilium. Involved in ciliary process assembly. May play a role in the trafficking of ciliary membrane proteins from the Golgi complex to the cilium. Regulates the platelet-derived growth factor receptor-alpha (PDGFRA) signaling pathway. Plays an important role in spermatogenesis, particularly spermiogenesis, when germ cells form flagella. The polypeptide is Intraflagellar transport protein 20 homolog A (ift20-a) (Xenopus laevis (African clawed frog)).